The following is a 172-amino-acid chain: Shikimate kinase (172 aa).

Position 14 to 19 (14 to 19) interacts with ATP; sequence GAGKST. Serine 18 contacts Mg(2+). Substrate-binding residues include aspartate 36, arginine 60, and glycine 82. Arginine 120 provides a ligand contact to ATP. Residue arginine 139 participates in substrate binding. Residue glutamine 156 participates in ATP binding.

Belongs to the shikimate kinase family. As to quaternary structure, monomer. Mg(2+) is required as a cofactor.

Its subcellular location is the cytoplasm. It carries out the reaction shikimate + ATP = 3-phosphoshikimate + ADP + H(+). Its pathway is metabolic intermediate biosynthesis; chorismate biosynthesis; chorismate from D-erythrose 4-phosphate and phosphoenolpyruvate: step 5/7. Its function is as follows. Catalyzes the specific phosphorylation of the 3-hydroxyl group of shikimic acid using ATP as a cosubstrate. The protein is Shikimate kinase of Aliivibrio fischeri (strain ATCC 700601 / ES114) (Vibrio fischeri).